The primary structure comprises 496 residues: Maturase K (496 aa).

The protein belongs to the intron maturase 2 family. MatK subfamily.

Its subcellular location is the plastid. The protein localises to the chloroplast. Its function is as follows. Usually encoded in the trnK tRNA gene intron. Probably assists in splicing its own and other chloroplast group II introns. The chain is Maturase K from Paeonia lactiflora (Chinese peony).